Here is a 306-residue protein sequence, read N- to C-terminus: Serine/threonine-protein phosphatase PP2A-1 catalytic subunit (306 aa).

The Mn(2+) site is built by aspartate 54, histidine 56, aspartate 82, and asparagine 114. Histidine 115 serves as the catalytic Proton donor. 2 residues coordinate Mn(2+): histidine 164 and histidine 238. Residue leucine 306 is modified to Leucine methyl ester.

Belongs to the PPP phosphatase family. PP-2A subfamily. PP2A consists of a common heterodimeric core enzyme, composed of a 36 kDa catalytic subunit (subunit C) and a 65 kDa constant regulatory subunit (subunit A), that associates with a variety of regulatory subunits such as subunits B (the R2/B/PR55/B55, R3/B''/PR72/PR130/PR59 and R5/B'/B56 families). Interacts with TAF12B. Interacts with SRK2E/OST1. Interacts with TAP46. Mn(2+) is required as a cofactor. In terms of processing, reversibly methyl esterified on Leu-306 by leucine carboxyl methyltransferase 1 (LCMT1) and pectin methylesterase 1 (PME1). Carboxyl methylation influences the affinity of the catalytic subunit for the different regulatory subunits, thereby modulating the PP2A holoenzyme's substrate specificity, enzyme activity and cellular localization. Post-translationally, phosphorylation of either threonine (by autophosphorylation-activated protein kinase) or tyrosine results in inactivation of the phosphatase. Auto-dephosphorylation has been suggested as a mechanism for reactivation.

The protein localises to the cytoplasm. It catalyses the reaction O-phospho-L-seryl-[protein] + H2O = L-seryl-[protein] + phosphate. The catalysed reaction is O-phospho-L-threonyl-[protein] + H2O = L-threonyl-[protein] + phosphate. The protein is Serine/threonine-protein phosphatase PP2A-1 catalytic subunit of Arabidopsis thaliana (Mouse-ear cress).